A 448-amino-acid polypeptide reads, in one-letter code: Nicotinate phosphoribosyltransferase pncB1 (448 aa).

A disordered region spans residues 1-21; it reads MGPPPAARRREGEPDNQDPAG. A Phosphohistidine modification is found at histidine 212. A disordered region spans residues 353 to 372; the sequence is RSSYKESPGGRKEALRRSRA.

The protein belongs to the NAPRTase family. In terms of processing, transiently phosphorylated on a His residue during the reaction cycle. Phosphorylation strongly increases the affinity for substrates and increases the rate of nicotinate D-ribonucleotide production. Dephosphorylation regenerates the low-affinity form of the enzyme, leading to product release.

It catalyses the reaction nicotinate + 5-phospho-alpha-D-ribose 1-diphosphate + ATP + H2O = nicotinate beta-D-ribonucleotide + ADP + phosphate + diphosphate. It participates in cofactor biosynthesis; NAD(+) biosynthesis; nicotinate D-ribonucleotide from nicotinate: step 1/1. Functionally, involved in the Preiss-Handler pathway, which is a recycling route that permits the salvage of free nicotinamide (NM) and nicotinic acid (Na) involved in the NAD biosynthesis. Catalyzes the synthesis of beta-nicotinate D-ribonucleotide from nicotinate and 5-phospho-D-ribose 1-phosphate at the expense of ATP. It is not able to use nicotinamide. PncB1 contributes to basal NAD level. This chain is Nicotinate phosphoribosyltransferase pncB1 (pncB1), found in Mycobacterium tuberculosis (strain CDC 1551 / Oshkosh).